Consider the following 389-residue polypeptide: Glutamate 5-kinase (389 aa).

K16 lines the ATP pocket. Residues S56, D143, and N155 each coordinate substrate. Residue 175–176 (SD) participates in ATP binding. The PUA domain occupies 281 to 358 (AGELHVDEGA…AEIEAILGYA (78 aa)).

Belongs to the glutamate 5-kinase family.

Its subcellular location is the cytoplasm. It carries out the reaction L-glutamate + ATP = L-glutamyl 5-phosphate + ADP. Its pathway is amino-acid biosynthesis; L-proline biosynthesis; L-glutamate 5-semialdehyde from L-glutamate: step 1/2. In terms of biological role, catalyzes the transfer of a phosphate group to glutamate to form L-glutamate 5-phosphate. The protein is Glutamate 5-kinase of Rhizobium etli (strain ATCC 51251 / DSM 11541 / JCM 21823 / NBRC 15573 / CFN 42).